The chain runs to 507 residues: ATP synthase subunit alpha (507 aa).

170-177 (GDRQTGKT) provides a ligand contact to ATP.

This sequence belongs to the ATPase alpha/beta chains family. In terms of assembly, F-type ATPases have 2 components, CF(1) - the catalytic core - and CF(0) - the membrane proton channel. CF(1) has five subunits: alpha(3), beta(3), gamma(1), delta(1), epsilon(1). CF(0) has three main subunits: a(1), b(2) and c(9-12). The alpha and beta chains form an alternating ring which encloses part of the gamma chain. CF(1) is attached to CF(0) by a central stalk formed by the gamma and epsilon chains, while a peripheral stalk is formed by the delta and b chains.

The protein localises to the cell inner membrane. It catalyses the reaction ATP + H2O + 4 H(+)(in) = ADP + phosphate + 5 H(+)(out). In terms of biological role, produces ATP from ADP in the presence of a proton gradient across the membrane. The alpha chain is a regulatory subunit. The protein is ATP synthase subunit alpha of Fervidobacterium nodosum (strain ATCC 35602 / DSM 5306 / Rt17-B1).